The following is a 443-amino-acid chain: Regulator of sigma E protease (443 aa).

Histidine 21 serves as a coordination point for Zn(2+). Glutamate 22 is a catalytic residue. Residue histidine 25 coordinates Zn(2+). The helical transmembrane segment at 98–118 (FVIIAGPLANFIFAIFAYWVI) threads the bilayer. PDZ domains lie at 106–185 (ANFI…SPFN) and 198–287 (NWTF…TPVR). 2 consecutive transmembrane segments (helical) span residues 369–389 (LVYF…MNLF) and 423–443 (IGAA…FLRL).

Belongs to the peptidase M50B family. As to quaternary structure, interacts with RseA. Zn(2+) serves as cofactor.

The protein localises to the cell inner membrane. In terms of biological role, a site-2 regulated intramembrane protease (S2P) that cleaves a peptide bond in the transmembrane region of RseA. Part of a regulated intramembrane proteolysis (RIP) cascade. Acts on DegS-cleaved RseA to release the cytoplasmic domain of RseA. This provides the cell with sigma-E (RpoE) activity through the proteolysis of RseA. The sequence is that of Regulator of sigma E protease (rsep) from Haemophilus influenzae (strain ATCC 51907 / DSM 11121 / KW20 / Rd).